The primary structure comprises 764 residues: MSMTTIAPEQVNRIVWNQHHDPFEILGSHPIEQNGKTVWVVRAYLPNASAAWVVLPEQRQEYPMQTVHDPHFFECIIETSELSNYQLKTKEGEHERVSYDPYAFRSPRLTDFDLHLFAEGNHHRIYEKLGAHFTEVGGVKGVYFAVWAPNARNVSVLGDFNLWDGRKHQMRKGATGVWELFIPEIGVGEHYKYEIKNFAGHIYEKSDPFGFQQEPRPKTASIVSNLNSYNWSDEDWLEQRRHTDPLTQPISVYEVHLGSWLHAASAEPAQLPNGETEPVVIASELNPGARFLTYRELASRLIPYVKELGYTHIELLPIAEHPFDGSWGYQVTGYYAPTSRFGTPEDFMYFVDQCHQNNIGVLVDWVPGHFPKDGHGLAFFDGTHLYEHADPRKGEHKEWGTLVFNYSRNEVRNFLVANALFWFDKYHIDGIRVDAVASMLYLDYCRKEGEWLPNQYGGRENLEAADFLRQVNHLLFSYFPGVLSIAEESTDWPMVSWPTYTGGLGFNLKWNMGWMHDMLDYFSMDPWFRQFHQNNITFSMWYNHSENFMLALSHDEVVHGKSNIIGKMPGDKWQKLANVRCLFAYMFAHPGKKTMFMSMEFGQWSEWNVWADLEWPLLQFEPHQQLKKFFTELNKLYRSEPALYTLDFAREGFDWIDCSDNRHSVVSFIRREKDTENFVVVICNFTPQPHSHYRIGVPEKGFYTELFNSDARQYGGSNMGNLGGKWTDDWSMHNRPYSLDLCLPPLGVLILKMDKEKTAKALGS.

D434 acts as the Nucleophile in catalysis. The active-site Proton donor is the E487.

Belongs to the glycosyl hydrolase 13 family. GlgB subfamily. In terms of assembly, monomer.

The enzyme catalyses Transfers a segment of a (1-&gt;4)-alpha-D-glucan chain to a primary hydroxy group in a similar glucan chain.. It participates in glycan biosynthesis; glycogen biosynthesis. Functionally, catalyzes the formation of the alpha-1,6-glucosidic linkages in glycogen by scission of a 1,4-alpha-linked oligosaccharide from growing alpha-1,4-glucan chains and the subsequent attachment of the oligosaccharide to the alpha-1,6 position. The chain is 1,4-alpha-glucan branching enzyme GlgB from Nostoc sp. (strain PCC 7120 / SAG 25.82 / UTEX 2576).